Here is a 279-residue protein sequence, read N- to C-terminus: Tryptophan synthase alpha chain (279 aa).

Active-site proton acceptor residues include glutamate 50 and aspartate 61.

Belongs to the TrpA family. As to quaternary structure, tetramer of two alpha and two beta chains.

The catalysed reaction is (1S,2R)-1-C-(indol-3-yl)glycerol 3-phosphate + L-serine = D-glyceraldehyde 3-phosphate + L-tryptophan + H2O. The protein operates within amino-acid biosynthesis; L-tryptophan biosynthesis; L-tryptophan from chorismate: step 5/5. The alpha subunit is responsible for the aldol cleavage of indoleglycerol phosphate to indole and glyceraldehyde 3-phosphate. The protein is Tryptophan synthase alpha chain of Brucella ovis (strain ATCC 25840 / 63/290 / NCTC 10512).